Consider the following 525-residue polypeptide: Glutamyl-tRNA(Gln) amidotransferase subunit A, mitochondrial (525 aa).

Active-site charge relay system residues include K76 and S168. S192 serves as the catalytic Acyl-ester intermediate.

Belongs to the amidase family. GatA subfamily. As to quaternary structure, subunit of the heterotrimeric GatCAB amidotransferase (AdT) complex, composed of A (QRSL1), B (GATB) and C (GATC) subunits.

Its subcellular location is the mitochondrion. The enzyme catalyses L-glutamyl-tRNA(Gln) + L-glutamine + ATP + H2O = L-glutaminyl-tRNA(Gln) + L-glutamate + ADP + phosphate + H(+). Functionally, allows the formation of correctly charged Gln-tRNA(Gln) through the transamidation of misacylated Glu-tRNA(Gln) in the mitochondria. The reaction takes place in the presence of glutamine and ATP through an activated gamma-phospho-Glu-tRNA(Gln). This Mus musculus (Mouse) protein is Glutamyl-tRNA(Gln) amidotransferase subunit A, mitochondrial (Qrsl1).